The following is a 274-amino-acid chain: Large ribosomal subunit protein uL2 (274 aa).

2 disordered regions span residues 40 to 59 (SGGRNNLGRVTRRHQGGGHK) and 223 to 274 (VAMN…RRSR). Composition is skewed to basic residues over residues 49 to 59 (VTRRHQGGGHK) and 256 to 274 (YRTRRNKRTSNMIVRRRSR).

Belongs to the universal ribosomal protein uL2 family. Part of the 50S ribosomal subunit. Forms a bridge to the 30S subunit in the 70S ribosome.

In terms of biological role, one of the primary rRNA binding proteins. Required for association of the 30S and 50S subunits to form the 70S ribosome, for tRNA binding and peptide bond formation. It has been suggested to have peptidyltransferase activity; this is somewhat controversial. Makes several contacts with the 16S rRNA in the 70S ribosome. The polypeptide is Large ribosomal subunit protein uL2 (Acidithiobacillus ferrooxidans (strain ATCC 23270 / DSM 14882 / CIP 104768 / NCIMB 8455) (Ferrobacillus ferrooxidans (strain ATCC 23270))).